Here is a 362-residue protein sequence, read N- to C-terminus: MTQRAYNFNAGPSALPQEVLEKAQQQLVDFRDSGMSIMEMSHRSAIFDEVHNEAIALLKKLYAIPENYEVLFLQGGASLQFTMVPMNFLSTDQKASYVLSGSWSEKAFKEAKFFGTPVEAASTKDNQYRNIPALADIQFDEDDAYVHITSNNTIYGTQWRDYPDTGNVPLVADMSSDILSKPIDIQKFGLIYAGAQKNLGPSGVTVVIIRKDLLEKANKSIPTMLKYTTHADSNSLYNTPPTFGIYMLGEVLKWVESNGGVTAVEKRNELKAKVIYDAIDNSNGFYKGHATPESRSLMNITFRVADEELEKQFLAEAKAAGFVGLNGHRSVGGCRASTYNAVPLEACEALRDFMVDFQQKHQ.

Residue Arg43 coordinates L-glutamate. Residues 77–78 (AS), Trp103, Thr153, Asp173, and Gln196 each bind pyridoxal 5'-phosphate. Lys197 is modified (N6-(pyridoxal phosphate)lysine). 238–239 (NT) is a binding site for pyridoxal 5'-phosphate.

It belongs to the class-V pyridoxal-phosphate-dependent aminotransferase family. SerC subfamily. As to quaternary structure, homodimer. Requires pyridoxal 5'-phosphate as cofactor.

The protein resides in the cytoplasm. It catalyses the reaction O-phospho-L-serine + 2-oxoglutarate = 3-phosphooxypyruvate + L-glutamate. The enzyme catalyses 4-(phosphooxy)-L-threonine + 2-oxoglutarate = (R)-3-hydroxy-2-oxo-4-phosphooxybutanoate + L-glutamate. Its pathway is amino-acid biosynthesis; L-serine biosynthesis; L-serine from 3-phospho-D-glycerate: step 2/3. Catalyzes the reversible conversion of 3-phosphohydroxypyruvate to phosphoserine and of 3-hydroxy-2-oxo-4-phosphonooxybutanoate to phosphohydroxythreonine. The sequence is that of Phosphoserine aminotransferase from Lysinibacillus sphaericus (strain C3-41).